The chain runs to 62 residues: Large ribosomal subunit protein uL30 (62 aa).

Belongs to the universal ribosomal protein uL30 family. In terms of assembly, part of the 50S ribosomal subunit.

In Geobacillus thermodenitrificans (strain NG80-2), this protein is Large ribosomal subunit protein uL30.